We begin with the raw amino-acid sequence, 1109 residues long: Receptor-like protein kinase (1109 aa).

Residues 1–20 form the signal peptide; sequence MKVAVNTFLLFLCSTSSIYA. Topologically, residues 21–764 are extracellular; the sequence is AFALNSDGAA…GGLSTLGIAM (744 aa). N-linked (GlcNAc...) asparagine glycans are attached at residues asparagine 50, asparagine 74, and asparagine 114. 6 LRR repeats span residues 69–92, 93–115, 117–140, 141–162, 165–187, and 189–209; these read FVDT…SHLK, HLKK…LGNC, LLEH…GALQ, NLRN…SLLS, HLET…IGNM, and ELTT…SSLG. N-linked (GlcNAc...) asparagine glycans are attached at residues asparagine 144, asparagine 177, and asparagine 186. Asparagine 210 is a glycosylation site (N-linked (GlcNAc...) asparagine). LRR repeat units follow at residues 213–236, 237–258, 261–284, 309–331, 333–355, 357–378, 381–404, 405–427, 429–451, 453–476, 477–499, 500–523, 524–546, 548–569, 572–595, 596–618, 620–642, 643–666, 667–689, and 690–710; these read TLQE…NNLE, NLVY…DFVS, QIDT…GNCT, KLDT…LGKC, SMID…LGML, QLQY…SIWK, SLQS…TELK, QLVS…LGAN, SLEV…LCSQ, KLKR…GGCS, TLER…VEKQ, NLLF…GNLK, NVTA…LGSL, KLEH…ELSN, KLSE…GSLT, ELTK…LFQS, KLLN…GALQ, ALRS…GKLK, MLEE…STIQ, and SLTF…PSLT. Residues asparagine 245 and asparagine 282 are each glycosylated (N-linked (GlcNAc...) asparagine). N-linked (GlcNAc...) asparagine glycosylation is found at asparagine 367, asparagine 391, and asparagine 427. Asparagine 510, asparagine 524, asparagine 553, and asparagine 584 each carry an N-linked (GlcNAc...) asparagine glycan. Asparagine 648, asparagine 677, and asparagine 695 each carry an N-linked (GlcNAc...) asparagine glycan. A helical transmembrane segment spans residues 765–785; the sequence is IVLGALLFIICLFLFSAFLFL. Residues 786 to 1109 are Cytoplasmic-facing; that stretch reads HCKKSVQEIA…YSSSVRNKSK (324 aa). A Protein kinase domain is found at 816-1096; it reads LNDKYVIGKG…DVVKQLTRWS (281 aa). Residues 822–830 and lysine 845 each bind ATP; that span reads IGKGAHGTI. Residues 827 to 850 form an LRR 27 repeat; the sequence is HGTIYKATLSPDKVYAVKKLVFTG. Residue aspartate 942 is the Proton acceptor of the active site. The stretch at 958 to 981 is one LRR 28 repeat; that stretch reads ISDFGIAKLLDQSATSIPSNTVQG.

The protein belongs to the protein kinase superfamily. Ser/Thr protein kinase family. In terms of tissue distribution, INRPK1 and INRPK1b are expressed in leaves, cotyledons, shoot tips and roots from induced and vegetative plants. The highest concentrations of INRPK1 are found in vegetative roots, and the lowest concentrations in vegetative cotyledons. INRPK1b is more abundant in roots than other tissues. INRPK1a is expressed in vegetative roots. INRPK1c is expressed in cotyledons.

It localises to the cell membrane. The protein localises to the secreted. It catalyses the reaction L-seryl-[protein] + ATP = O-phospho-L-seryl-[protein] + ADP + H(+). The enzyme catalyses L-threonyl-[protein] + ATP = O-phospho-L-threonyl-[protein] + ADP + H(+). In terms of biological role, possible role in short-day photoperiod floral induction. The sequence is that of Receptor-like protein kinase (INRPK1) from Ipomoea nil (Japanese morning glory).